A 59-amino-acid chain; its full sequence is Mu-conotoxin SrVA (59 aa).

A signal peptide spans 1 to 22 (MRCLPVFVILLLLIASAPSVDA). A propeptide spanning residues 23-44 (QLKTKDDVPLASFHDNAKGTQH) is cleaved from the precursor. Cystine bridges form between cysteine 51/cysteine 58 and cysteine 52/cysteine 59.

It belongs to the conotoxin T superfamily. Expressed by the venom duct.

Its subcellular location is the secreted. Mu-conotoxins block voltage-gated sodium channels. This peptide inhibits the cardiac sodium channel hNav1.5/SCN5A (33% inhibition at 200 nM, 50% at 400 nM, and 55% at 600 nM). Does not interfere with the voltage-dependence of activation, but affects the voltage-dependence of inactivation of hNav1.5. In vivo, intracranial injection into 9-day-old mice causes transient symptoms, including extension of the body and clockwise and counter-clockwise turns, that last 3 to 4 minutes. Intracranial injection into 16-day-old mice, causes transient symptoms, including agitated breathing and occasional turning followed by scratching and grooming behavior, that last for 15-19 minutes. The chain is Mu-conotoxin SrVA from Conus spurius (Alphabet cone).